Reading from the N-terminus, the 51-residue chain is uncharacterized protein (51 aa).

This protein is non-essential for virus function. This is an uncharacterized protein from Sulfolobus spindle-shape virus 1 (SSV1).